Consider the following 157-residue polypeptide: MFDILMYLFENYVHSEVEFLVDEDELTKELTRAGFHQAEIIKALTWLEGLAELQEAGTPYLCNHDQQSFRIYTKDELERIDVESRGFLLFLEQIKVLSVETREMVIDRVMQLDESSLNLDDLKWVILMVLFNAPGHESAYEQMEDLIFEQPDGRLHS.

It belongs to the Smg family.

The polypeptide is Protein Smg homolog (Shewanella piezotolerans (strain WP3 / JCM 13877)).